A 396-amino-acid polypeptide reads, in one-letter code: 1-deoxy-D-xylulose 5-phosphate reductoisomerase (396 aa).

T13, G14, S15, I16, and N127 together coordinate NADPH. A 1-deoxy-D-xylulose 5-phosphate-binding site is contributed by K128. E129 is an NADPH binding site. Residue D153 participates in Mn(2+) binding. 4 residues coordinate 1-deoxy-D-xylulose 5-phosphate: S154, E155, S184, and H207. E155 serves as a coordination point for Mn(2+). Residue G213 coordinates NADPH. 4 residues coordinate 1-deoxy-D-xylulose 5-phosphate: S220, N225, K226, and E229. E229 provides a ligand contact to Mn(2+).

It belongs to the DXR family. The cofactor is Mg(2+). Mn(2+) is required as a cofactor.

The enzyme catalyses 2-C-methyl-D-erythritol 4-phosphate + NADP(+) = 1-deoxy-D-xylulose 5-phosphate + NADPH + H(+). Its pathway is isoprenoid biosynthesis; isopentenyl diphosphate biosynthesis via DXP pathway; isopentenyl diphosphate from 1-deoxy-D-xylulose 5-phosphate: step 1/6. Its function is as follows. Catalyzes the NADPH-dependent rearrangement and reduction of 1-deoxy-D-xylulose-5-phosphate (DXP) to 2-C-methyl-D-erythritol 4-phosphate (MEP). The chain is 1-deoxy-D-xylulose 5-phosphate reductoisomerase from Pseudomonas paraeruginosa (strain DSM 24068 / PA7) (Pseudomonas aeruginosa (strain PA7)).